Here is a 248-residue protein sequence, read N- to C-terminus: Aquaporin TIP2-3 (248 aa).

2 consecutive transmembrane segments (helical) span residues 20-40 (AYVA…GSAI) and 54-74 (AGLV…VSMA). An NPA 1 motif is present at residues 83 to 85 (NPA). The next 3 helical transmembrane spans lie at 97–119 (TILT…CFLL), 141–161 (GVVM…ATAA), and 168–188 (LGTI…LAAG). An NPA 2 motif is present at residues 196–198 (NPA). A helical transmembrane segment spans residues 217-237 (WVGPLVGGGLAGLVYGDVFIA).

The protein belongs to the MIP/aquaporin (TC 1.A.8) family. TIP (TC 1.A.8.10) subfamily. In terms of tissue distribution, specifically expressed in roots.

It is found in the cell membrane. Functionally, water channel required to facilitate the transport of water across cell membrane. The protein is Aquaporin TIP2-3 (TIP2-3) of Zea mays (Maize).